The following is a 104-amino-acid chain: Replication restart protein PriB (104 aa).

Positions 1 to 101 (MTNRLALSGT…LHAEQIELID (101 aa)) constitute an SSB domain.

Belongs to the PriB family. Homodimer. Interacts with PriA and DnaT. Component of the replication restart primosome. Primosome assembly occurs via a 'hand-off' mechanism. PriA binds to replication forks, subsequently PriB then DnaT bind; DnaT then displaces ssDNA to generate the helicase loading substrate.

Its function is as follows. Involved in the restart of stalled replication forks, which reloads the replicative helicase on sites other than the origin of replication; the PriA-PriB pathway is the major replication restart pathway. During primosome assembly it facilitates complex formation between PriA and DnaT on DNA; stabilizes PriA on DNA. Stimulates the DNA unwinding activity of PriA helicase. The sequence is that of Replication restart protein PriB from Salmonella agona (strain SL483).